The chain runs to 61 residues: Small ribosomal subunit protein uS14B (61 aa).

Residues Cys-24, Cys-27, Cys-40, and Cys-43 each contribute to the Zn(2+) site.

This sequence belongs to the universal ribosomal protein uS14 family. Zinc-binding uS14 subfamily. Part of the 30S ribosomal subunit. Contacts proteins S3 and S10. Zn(2+) serves as cofactor.

Binds 16S rRNA, required for the assembly of 30S particles and may also be responsible for determining the conformation of the 16S rRNA at the A site. This chain is Small ribosomal subunit protein uS14B, found in Kineococcus radiotolerans (strain ATCC BAA-149 / DSM 14245 / SRS30216).